A 2184-amino-acid polypeptide reads, in one-letter code: Genome polyprotein (2184 aa).

Gly2 is lipidated: N-myristoyl glycine; by host. Over 2–1494 the chain is Cytoplasmic; it reads GAQVSTQKTG…HVSRAFICLQ (1493 aa). Residues 566 to 582 are amphipathic alpha-helix; sequence FYQSPVEGAIERAIARV. Catalysis depends on for protease 2A activity residues His871 and Asp889. Zn(2+) contacts are provided by Cys906 and Cys908. The For protease 2A activity role is filled by Cys960. Zn(2+) contacts are provided by Cys966 and His968. Residues 1100–1172 are membrane-binding; it reads SNGWLKKFTE…EQSAPSQSDQ (73 aa). Residues 1100–1238 are oligomerization; sequence SNGWLKKFTE…SPGAGKSVAT (139 aa). The tract at residues 1121–1125 is RNA-binding; that stretch reads AIKIQ. The SF3 helicase domain maps to 1204–1360; that stretch reads EKKMSNYIQF…SMYSQNGKIN (157 aa). Zn(2+) contacts are provided by Cys1368, Cys1380, and Cys1385. The C4-type; degenerate zinc finger occupies 1368 to 1385; the sequence is CDEECCPVNFKKCCPLVC. The segment at 1412–1419 is RNA-binding; it reads EYNHRHSV. Residues 1423 to 1428 form an oligomerization region; the sequence is LEALFQ. The stretch at 1495–1510 is an intramembrane region; that stretch reads ALTTFVSVAGIIYIIY. The Cytoplasmic segment spans residues 1511-2184; sequence KLFAGFQGAY…TLRRKWLDSF (674 aa). Tyr1520 is modified (O-(5'-phospho-RNA)-tyrosine). The 179-residue stretch at 1540–1718 folds into the Peptidase C3 domain; sequence GPAFEFAVAM…FSAALLKHYF (179 aa). Catalysis depends on for protease 3C activity residues His1579, Glu1610, and Cys1686. In terms of domain architecture, RdRp catalytic spans 1949-2065; it reads GHLIAFDYSG…SYPWPIDASL (117 aa). Residues Asp1955 and Asp2051 each contribute to the Mg(2+) site.

The protein belongs to the picornaviruses polyprotein family. In terms of assembly, interacts with capsid protein VP1 and capsid protein VP3 to form heterotrimeric protomers. As to quaternary structure, interacts with capsid protein VP0, and capsid protein VP3 to form heterotrimeric protomers. Five protomers subsequently associate to form pentamers which serve as building blocks for the capsid. Interacts with capsid protein VP2, capsid protein VP3 and capsid protein VP4 following cleavage of capsid protein VP0. Interacts with host CXADR. Interacts with capsid protein VP1 and capsid protein VP3 in the mature capsid. In terms of assembly, interacts with capsid protein VP0 and capsid protein VP1 to form heterotrimeric protomers. Five protomers subsequently associate to form pentamers which serve as building blocks for the capsid. Interacts with capsid protein VP4 in the mature capsid. Interacts with protein 2C; this interaction may be important for virion morphogenesis. As to quaternary structure, interacts with capsid protein VP1 and capsid protein VP3. Homodimer. In terms of assembly, homohexamer; forms a hexameric ring structure with 6-fold symmetry characteristic of AAA+ ATPases. Interacts (via N-terminus) with host RTN3 (via reticulon domain); this interaction is important for viral replication. Interacts with capsid protein VP3; this interaction may be important for virion morphogenesis. As to quaternary structure, interacts with protein 3CD. Homodimer. Interacts with host GBF1. Interacts (via GOLD domain) with host ACBD3 (via GOLD domain); this interaction allows the formation of a viral protein 3A/ACBD3 heterotetramer with a 2:2 stoichiometry, which will stimulate the recruitment of host PI4KB in order to synthesize PI4P at the viral RNA replication sites. In terms of assembly, interacts with RNA-directed RNA polymerase. As to quaternary structure, interacts with protein 3AB and with RNA-directed RNA polymerase. Interacts with Viral protein genome-linked and with protein 3CD. The cofactor is Mg(2+). In terms of processing, specific enzymatic cleavages in vivo by the viral proteases yield processing intermediates and the mature proteins. Myristoylation is required for the formation of pentamers during virus assembly. Further assembly of 12 pentamers and a molecule of genomic RNA generates the provirion. Post-translationally, during virion maturation, immature virions are rendered infectious following cleavage of VP0 into VP4 and VP2. This maturation seems to be an autocatalytic event triggered by the presence of RNA in the capsid and it is followed by a conformational change infectious virion. In terms of processing, myristoylation is required during RNA encapsidation and formation of the mature virus particle. VPg is uridylylated by the polymerase into VPg-pUpU. This acts as a nucleotide-peptide primer for the genomic RNA replication.

The protein localises to the virion. It is found in the host cytoplasm. Its subcellular location is the host cytoplasmic vesicle membrane. The protein resides in the host nucleus. The catalysed reaction is a ribonucleoside 5'-triphosphate + H2O = a ribonucleoside 5'-diphosphate + phosphate + H(+). It carries out the reaction Selective cleavage of Tyr-|-Gly bond in the picornavirus polyprotein.. It catalyses the reaction RNA(n) + a ribonucleoside 5'-triphosphate = RNA(n+1) + diphosphate. The enzyme catalyses Selective cleavage of Gln-|-Gly bond in the poliovirus polyprotein. In other picornavirus reactions Glu may be substituted for Gln, and Ser or Thr for Gly.. With respect to regulation, replication or transcription is subject to high level of random mutations by the nucleotide analog ribavirin. Forms an icosahedral capsid of pseudo T=3 symmetry with capsid proteins VP2 and VP3. The capsid is 300 Angstroms in diameter, composed of 60 copies of each capsid protein and enclosing the viral positive strand RNA genome. Capsid protein VP1 mainly forms the vertices of the capsid. Capsid protein VP1 interacts with host CXADR to provide virion attachment to target host cells. This attachment induces virion internalization. Tyrosine kinases are probably involved in the entry process. After binding to its receptor, the capsid undergoes conformational changes. Capsid protein VP1 N-terminus (that contains an amphipathic alpha-helix) and capsid protein VP4 are externalized. Together, they shape a pore in the host membrane through which viral genome is translocated to host cell cytoplasm. Its function is as follows. Forms an icosahedral capsid of pseudo T=3 symmetry with capsid proteins VP2 and VP3. The capsid is 300 Angstroms in diameter, composed of 60 copies of each capsid protein and enclosing the viral positive strand RNA genome. Functionally, lies on the inner surface of the capsid shell. After binding to the host receptor, the capsid undergoes conformational changes. Capsid protein VP4 is released, Capsid protein VP1 N-terminus is externalized, and together, they shape a pore in the host membrane through which the viral genome is translocated into the host cell cytoplasm. In terms of biological role, component of immature procapsids, which is cleaved into capsid proteins VP4 and VP2 after maturation. Allows the capsid to remain inactive before the maturation step. Cysteine protease that cleaves viral polyprotein and specific host proteins. It is responsible for the autocatalytic cleavage between the P1 and P2 regions, which is the first cleavage occurring in the polyprotein. Also cleaves the host translation initiation factor EIF4G1, in order to shut down the capped cellular mRNA translation. Inhibits the host nucleus-cytoplasm protein and RNA trafficking by cleaving host members of the nuclear pores. Counteracts stress granule formation probably by antagonizing its assembly or promoting its dissassembly. Cleaves and inhibits host IFIH1/MDA5, thereby inhibiting the type-I IFN production and the establishment of the antiviral state. Cleaves and inhibits host MAVS, thereby inhibiting the type-I IFN production and the establishment of the antiviral state. Its function is as follows. Plays an essential role in the virus replication cycle by acting as a viroporin. Creates a pore in the host endoplasmic reticulum and as a consequence releases Ca2+ in the cytoplasm of infected cell. In turn, high levels of cytoplasmic calcium may trigger membrane trafficking and transport of viral ER-associated proteins to viroplasms, sites of viral genome replication. Functionally, induces and associates with structural rearrangements of intracellular membranes. Displays RNA-binding, nucleotide binding and NTPase activities. May play a role in virion morphogenesis and viral RNA encapsidation by interacting with the capsid protein VP3. In terms of biological role, localizes the viral replication complex to the surface of membranous vesicles. Together with protein 3CD binds the Cis-Active RNA Element (CRE) which is involved in RNA synthesis initiation. Acts as a cofactor to stimulate the activity of 3D polymerase, maybe through a nucleid acid chaperone activity. Localizes the viral replication complex to the surface of membranous vesicles. It inhibits host cell endoplasmic reticulum-to-Golgi apparatus transport and causes the disassembly of the Golgi complex, possibly through GBF1 interaction. This would result in depletion of MHC, trail receptors and IFN receptors at the host cell surface. Plays an essential role in viral RNA replication by recruiting ACBD3 and PI4KB at the viral replication sites, thereby allowing the formation of the rearranged membranous structures where viral replication takes place. Its function is as follows. Acts as a primer for viral RNA replication and remains covalently bound to viral genomic RNA. VPg is uridylylated prior to priming replication into VPg-pUpU. The oriI viral genomic sequence may act as a template for this. The VPg-pUpU is then used as primer on the genomic RNA poly(A) by the RNA-dependent RNA polymerase to replicate the viral genome. During genome replication, the VPg-RNA linkage is removed by the host TDP2, thereby accelerating replication. During the late stage of the replication cycle, host TDP2 is excluded from sites of viral RNA synthesis and encapsidation, allowing for the generation of progeny virions. Functionally, involved in the viral replication complex and viral polypeptide maturation. It exhibits protease activity with a specificity and catalytic efficiency that is different from protease 3C. Protein 3CD lacks polymerase activity. Protein 3CD binds to the 5'UTR of the viral genome. In terms of biological role, replicates the viral genomic RNA on the surface of intracellular membranes. May form linear arrays of subunits that propagate along a strong head-to-tail interaction called interface-I. Covalently attaches UMP to a tyrosine of VPg, which is used to prime RNA synthesis. The positive stranded RNA genome is first replicated at virus induced membranous vesicles, creating a dsRNA genomic replication form. This dsRNA is then used as template to synthesize positive stranded RNA genomes. ss(+)RNA genomes are either translated, replicated or encapsidated. Major viral protease that mediates proteolytic processing of the polyprotein. Cleaves host EIF5B, contributing to host translation shutoff. Also cleaves host PABPC1, contributing to host translation shutoff. Cleaves host NLRP1, triggers host N-glycine-mediated degradation of the autoinhibitory NLRP1 N-terminal fragment. This is Genome polyprotein from Coxsackievirus B6 (strain Schmitt).